A 416-amino-acid chain; its full sequence is E3 ubiquitin-protein ligase makorin-2 (416 aa).

2 consecutive C3H1-type zinc fingers follow at residues 2 to 29 and 31 to 58; these read STKQ…HDLA and SKPS…HTRP. Over residues 113–122 the composition is skewed to basic and acidic residues; that stretch reads NLSGMAERKT. The disordered stretch occupies residues 113 to 142; it reads NLSGMAERKTQPSMVSNPGSCSDPQPSPEM. Over residues 123–136 the composition is skewed to polar residues; that stretch reads QPSMVSNPGSCSDP. Serine 139 bears the Phosphoserine mark. The C3H1-type 3 zinc finger occupies 165–192; sequence SNEQQLCPYAAAGECRFGDACVYLHGEV. The segment at 193-222 is makorin-type Cys-His; it reads CEICRLQVLHPFDPEQRKAHEKICMLTFEH. The RING-type zinc finger occupies 238–292; the sequence is CSICMEVILEKASASERRFGILSNCNHTYCLSCIRQWRCAKQFENPIIKSCPECR. A C3H1-type 4 zinc finger spans residues 321 to 350; the sequence is GMGKKACKYFEQGKGTCPFGSKCLYRHAYP.

Interacts with PDLIM2 (via LIM zinc-binding domain). Interacts with RELA. As to expression, expressed in sperm, with significantly reduced expression in sperm of patients with oligoasthenoteratozoospermia (at protein level). Widely expressed with expression in testis, ovary, small intestine, colon, peripheral blood leukocytes, fetal liver, bone marrow, thymus, lymph node and spleen.

It localises to the cytoplasm. Its subcellular location is the nucleus. It catalyses the reaction S-ubiquitinyl-[E2 ubiquitin-conjugating enzyme]-L-cysteine + [acceptor protein]-L-lysine = [E2 ubiquitin-conjugating enzyme]-L-cysteine + N(6)-ubiquitinyl-[acceptor protein]-L-lysine.. The protein operates within protein modification; protein ubiquitination. In terms of biological role, E3 ubiquitin ligase catalyzing the covalent attachment of ubiquitin moieties onto substrate proteins. Promotes the polyubiquitination and proteasome-dependent degradation of RELA/p65, thereby suppressing RELA-mediated NF-kappaB transactivation and negatively regulating inflammatory responses. Plays a role in the regulation of spermiation and in male fertility. This Homo sapiens (Human) protein is E3 ubiquitin-protein ligase makorin-2 (MKRN2).